The sequence spans 219 residues: Transmembrane emp24 domain-containing protein 10 (219 aa).

The signal sequence occupies residues 1-31 (MSGWSGPLARRGPGPLALLFLFLLGPSSVLA). Residues 1–142 (MSGWSGPLAR…KNYEEIAKVE (142 aa)) form a required for interaction with STX17 region. Over 32–185 (ISFHLPVNSR…RDTNESTNTR (154 aa)) the chain is Lumenal. One can recognise a GOLD domain in the interval 41-193 (RKCLREEIHK…TRVLYFSIFS (153 aa)). The tract at residues 147–178 (LEVELRRLEDLSESIVNDFAYMKKREEEMRDT) is required for TMED10 and TMED2 cis-Golgi network localization. Dimethylated arginine occurs at positions 171 and 176. Residue Asn179 is glycosylated (N-linked (GlcNAc...) asparagine). Residues 186–206 (VLYFSIFSMFCLIGLATWQVF) traverse the membrane as a helical segment. The segment at 204 to 219 (QVFYLRRFFKAKKLIE) is interaction with COPG1. Topologically, residues 207–219 (YLRRFFKAKKLIE) are cytoplasmic. The tract at residues 207 to 219 (YLRRFFKAKKLIE) is interaction with ARF1 and IL1B. The short motif at 211–212 (FF) is the COPII vesicle coat-binding element. The COPI vesicle coat-binding signature appears at 211–219 (FFKAKKLIE).

It belongs to the EMP24/GP25L family. As to quaternary structure, predominantly dimeric and to a lesser extent monomeric in the ER. Monomer and dimer in ERGIC and cis-Golgi network. Forms homooligomer (via GOLD domain); the assembly is promoted by direct binding with leaderless cargos and may form a protein channel that facilitates cargo entry into the ERGIC. Forms heterooligomeric complexes with other members of the p24 family such as TMED2, TMED7 and TMED9. Interacts (via GOLD domain) with TMED2 (via GOLD domain); the complex is required for export of TMED10 from the ER to the cis-Golgi network; the complex is proposed to be involved in cis-Golgi network dynamics and / or biogenesis. Associates with the COPI vesicle coat subunits (coatomer). Tetramerization of the cytoplasmic domain at the Golgi membrane in vitro; the complex is proposed to interact with COPI coatomer and induce budding of the vesicles. Interacts with COPG1; the interaction involves TMED10 homodimer. Interacts with ARF1 (GDP-bound); the interaction probably involves a TMED10 oligomer. Interacts with SEC23A, SEC24B, SEC24C and SEC24D components of the coat protein complex II/COPII, indicative of an association of TMED10 with the COPII vesicle coat. Interacts with CD59. Interacts with MPPE1/PGAP5; the complex might recruit and sort GPI-anchored proteins to the ER-exit site, or the interaction might lead to recycling of PGAP5 between the ER and the Golgi. Interacts with F2LR1/PAR2. Interacts with KDELR2/ERD2; the interaction is disrupted by KDELR2 ligand. Found in a complex composed at least of SURF4, TMED2 and TMED10. Associates with the presenilin-dependent gamma-secretase complex. Interacts with STX17; the interaction is direct. Interacts with IL-1; the interaction is direct. Interacts with RAB21 (active GTP-bound form); the interaction is indirect and regulates TMED10 abundance and localization at the Golgi.

It localises to the endoplasmic reticulum membrane. Its subcellular location is the endoplasmic reticulum-Golgi intermediate compartment membrane. The protein resides in the golgi apparatus membrane. It is found in the golgi apparatus. The protein localises to the cis-Golgi network membrane. It localises to the trans-Golgi network membrane. Its subcellular location is the cytoplasmic vesicle. The protein resides in the secretory vesicle membrane. It is found in the cell membrane. The protein localises to the melanosome. Functionally, cargo receptor involved in protein vesicular trafficking and quality control in the endoplasmic reticulum (ER) and Golgi. The p24 protein family is a group of transmembrane proteins that bind coat protein complex I/COPI and coat protein complex II/COPII involved in vesicular trafficking between the membranes. Acts at the lumenal side for incorporation of secretory cargo molecules into transport vesicles and involved in vesicle coat formation at the cytoplasmic side. Mainly functions in the early secretory pathway and cycles between the ER, ER-Golgi intermediate compartment (ERGIC) and Golgi, mediating cargo transport through COPI and COPII-coated vesicles. In COPII vesicle-mediated anterograde transport, involved in the transport of GPI-anchored proteins by acting together with TMED2 as their cargo receptor; the function specifically implies SEC24C and SEC24D of the COPII vesicle coat and lipid raft-like microdomains of the ER. Recognizes GPI anchors structural remodeled in the ER by the GPI inositol-deacylase/PGAP1 and the metallophosphoesterase MPPE1/PGAP5. In COPI vesicle-mediated retrograde transport, involved in the biogenesis of COPI vesicles and vesicle coat recruitment. Involved in trafficking of amyloid beta A4 protein and soluble APP-beta release (independent from the modulation of gamma-secretase activity). Involved in the KDELR2-mediated retrograde transport of the toxin A subunit (CTX-A-K63)together with COPI and the COOH terminus of KDELR2. On Golgi membranes, acts as a primary receptor for ARF1-GDP, a GTP-binding protein involved in COPI-vesicle formation. Increases coatomer-dependent GTPase-activating activity of ARFGAP2 which mediates the hydrolysis of ARF1-bound GTP and therefore modulates protein trafficking from the Golgi apparatus. Involved in the exocytic trafficking of G protein-coupled receptors F2LR1/PAR2 (trypsin and tryspin-like enzyme receptor), OPRM1 (opioid receptor) and P2RY4 (UTD and UDP receptor) from the Golgi to the plasma membrane, thus contributing to receptor resensitization. In addition to its cargo receptor activity, may also act as a protein channel after oligomerization, facilitating the post-translational entry of leaderless cytoplasmic cargo into the ERGIC. Involved in the translocation into ERGIC, the vesicle entry and the secretion of leaderless cargos (lacking the secretion signal sequence), including the mature form of interleukin 1/IL-1 family members, the alpha-crystallin B chain HSPB5, the carbohydrate-binding proteins galectin-1/LGALS1 and galectin-3/LGALS3, the microtubule-associated protein Tau/MAPT, and the annexin A1/ANXA1; the translocation process is dependent on cargo protein unfolding and enhanced by chaperones HSP90AB1 and HSP90B1/GRP9. Could also associates with the presenilin-dependent gamma-secretase complex in order to regulate gamma-cleavages of the amyloid beta A4 protein to yield amyloid-beta 40/Abeta40. The polypeptide is Transmembrane emp24 domain-containing protein 10 (TMED10) (Oryctolagus cuniculus (Rabbit)).